Consider the following 504-residue polypeptide: Glucose-6-phosphate isomerase (504 aa).

Catalysis depends on glutamate 333, which acts as the Proton donor. Catalysis depends on residues histidine 364 and lysine 473.

This sequence belongs to the GPI family.

The protein resides in the cytoplasm. It catalyses the reaction alpha-D-glucose 6-phosphate = beta-D-fructose 6-phosphate. It participates in carbohydrate biosynthesis; gluconeogenesis. It functions in the pathway carbohydrate degradation; glycolysis; D-glyceraldehyde 3-phosphate and glycerone phosphate from D-glucose: step 2/4. Functionally, catalyzes the reversible isomerization of glucose-6-phosphate to fructose-6-phosphate. This chain is Glucose-6-phosphate isomerase, found in Xanthomonas oryzae pv. oryzae (strain KACC10331 / KXO85).